A 517-amino-acid polypeptide reads, in one-letter code: MLSSRAQAARTAADKALQRFLRTGAAVRYKVMKNWGVIGGIAAALAAGIYVIWGPITERKKRRKGLVPGLVNLGNTCFMNSLLQGLSACPAFVKWLEEFTTQYSRDQQGPHTHQCLSLTLLNLLKALSCQEVTEDEVLDASCLLDVLRMYRWQISSFEEQDAHELFHVITSSLEDERDRQPRVTHLFDVHSLEQQSEMAPRQVTCHTRGSPHPTTNHWKSQHPFHGRLTSNMVCKHCEHQSPVRFDTFDSLSLSIPAATWGHPLTLDHCLHHFISSESVRDVVCDNCTKIEARGTLTGEKVEHQRSTFVKQLKLGKLPQCLCIHLQRLSWSSHGTPLKRHEHVQFNEFLMMDFYKYRLLGHKPSQHGPKATENPGSAPEVQDAQAAPKPGLSQPGAPKTQIFLNGACSPSLLPALPSPVAFPLPVVPDYSSSTYLFRLMAVVVHHGDMHSGHFVTYRRSPPSAKNPLSTSNQWLWISDDTVRKASLQEVLSSSAYLLFYERVLSRVQQQGREYRSEE.

Residues 1 to 35 (MLSSRAQAARTAADKALQRFLRTGAAVRYKVMKNW) are Mitochondrial intermembrane-facing. The chain crosses the membrane as a helical span at residues 36-56 (GVIGGIAAALAAGIYVIWGPI). The Cytoplasmic portion of the chain corresponds to 57 to 517 (TERKKRRKGL…QQGREYRSEE (461 aa)). Residues 68 to 502 (PGLVNLGNTC…SAYLLFYERV (435 aa)) enclose the USP domain. C77 functions as the Nucleophile in the catalytic mechanism. The interval 198–221 (MAPRQVTCHTRGSPHPTTNHWKSQ) is disordered. Residues 204 to 218 (TCHTRGSPHPTTNHW) show a composition bias toward polar residues. Glycyl lysine isopeptide (Lys-Gly) (interchain with G-Cter in ubiquitin) cross-links involve residues K235 and K289. The disordered stretch occupies residues 364–395 (SQHGPKATENPGSAPEVQDAQAAPKPGLSQPG). The active-site Proton acceptor is H452.

It belongs to the peptidase C19 family. Post-translationally, ubiquitinated by parkin (PRKN) at Lys-235 and Lys-289, leading to its degradation.

It is found in the mitochondrion outer membrane. It carries out the reaction Thiol-dependent hydrolysis of ester, thioester, amide, peptide and isopeptide bonds formed by the C-terminal Gly of ubiquitin (a 76-residue protein attached to proteins as an intracellular targeting signal).. With respect to regulation, inhibited by the diterpenoid derivative 15-oxospiramilactone (S3). Its function is as follows. Deubiquitinating enzyme tethered to the mitochondrial outer membrane that acts as a key inhibitor of mitophagy by counteracting the action of parkin (PRKN): hydrolyzes ubiquitin attached by parkin on target proteins, such as RHOT1/MIRO1 and TOMM20, thereby blocking parkin's ability to drive mitophagy. Preferentially cleaves 'Lys-6'- and 'Lys-11'-linked polyubiquitin chains, 2 types of linkage that participate in mitophagic signaling. Does not cleave efficiently polyubiquitin phosphorylated at 'Ser-65'. Acts as negative regulator of mitochondrial fusion by mediating deubiquitination of MFN1 and MFN2. The protein is Ubiquitin carboxyl-terminal hydrolase 30 (Usp30) of Mus musculus (Mouse).